Here is a 539-residue protein sequence, read N- to C-terminus: Alpha-copaene synthase (539 aa).

D290 and D294 together coordinate Mg(2+). Substrate is bound by residues D290, D294, and R432. Residues 290-294 (DDTFD) carry the DDXXD motif motif.

It belongs to the terpene synthase family. Monomer. Mg(2+) serves as cofactor. The cofactor is Mn(2+).

It localises to the cytoplasm. The enzyme catalyses (2E,6E)-farnesyl diphosphate = alpha-copaene + diphosphate. It catalyses the reaction (2E,6E)-farnesyl diphosphate = (+)-germacrene D + diphosphate. It carries out the reaction (2E,6E)-farnesyl diphosphate = (-)-(E)-beta-caryophyllene + diphosphate. The catalysed reaction is (2E,6E)-farnesyl diphosphate = delta-cadinene + diphosphate. The protein operates within secondary metabolite biosynthesis; terpenoid biosynthesis. Converts farnesyl diphosphate to the bicyclic olefins alpha-copaene, (E)-beta-caryophyllene, and to the macrocyclic sesquiterpene germacrene D. Also mediates the biosynthesis of minor sesquiterpene hydrocarbons including delta-cadinene. Involved in indirect defense by producing volatile signals attracting natural enemies of herbivores. The sequence is that of Alpha-copaene synthase from Zea mays (Maize).